We begin with the raw amino-acid sequence, 386 residues long: Putative matrix metalloproteinase (386 aa).

The N-terminal stretch at 1 to 34 (MPTAHFQHSIRYLNVTNMLIFSIISFLLIYQTNS) is a signal peptide. N-linked (GlcNAc...) asparagine; by host glycans are attached at residues asparagine 14 and asparagine 58. Histidine 186 is a binding site for Zn(2+). Residue glutamate 187 is part of the active site. 2 residues coordinate Zn(2+): histidine 190 and histidine 196. The segment at 235 to 258 (NEQSTHQSTRHRPHRRPSPDGSCR) is disordered.

This sequence belongs to the peptidase M10A family. The cofactor is Zn(2+).

This Spodoptera frugiperda (Fall armyworm) protein is Putative matrix metalloproteinase.